The primary structure comprises 98 residues: Protein Frey 1 (98 aa).

A helical membrane pass occupies residues 13-29; it reads AGLSLFLHLILAVALLR. The segment at 60–87 is disordered; it reads YGILPKHPRPRGPRPLLSRAQQRKRDGP.

In terms of assembly, interacts with SPPL2C (via active sites); the interaction stabilizes FREY1 protein and inhibits SPPL2C proteolytic activity. Interacts with IZUMO1; the interaction retains IZUMO1 at the endoplasmic reticulum membrane and coordinates IZUMO1 complex assembly.

The protein localises to the endoplasmic reticulum membrane. In terms of biological role, key regulator for male fertility expressed transiently in round spermatids where it recruits IZUMO1 at the endoplasmic reticulum (ER) membrane and coordinates the oolemmal binding multimeric complex (IZUMO1 complex) assembly. Upon complete assembly of the IZUMO1 complex, its ER retention is released, facilitating IZUMO1 complex export to the acrosome. Through the interaction with SPPL2C, inhibits its intramembrane protease activity directly accessing the catalytic center of an I-CLiP. The chain is Protein Frey 1 from Homo sapiens (Human).